Consider the following 361-residue polypeptide: Peptide chain release factor 1 (361 aa).

Q238 carries the post-translational modification N5-methylglutamine.

This sequence belongs to the prokaryotic/mitochondrial release factor family. In terms of processing, methylated by PrmC. Methylation increases the termination efficiency of RF1.

The protein localises to the cytoplasm. Peptide chain release factor 1 directs the termination of translation in response to the peptide chain termination codons UAG and UAA. This is Peptide chain release factor 1 from Mesomycoplasma hyopneumoniae (strain J / ATCC 25934 / NCTC 10110) (Mycoplasma hyopneumoniae).